Here is a 194-residue protein sequence, read N- to C-terminus: NADH-quinone oxidoreductase subunit B (194 aa).

4 residues coordinate [4Fe-4S] cluster: C73, C74, C138, and C168.

The protein belongs to the complex I 20 kDa subunit family. NDH-1 is composed of 14 different subunits. Subunits NuoB, C, D, E, F, and G constitute the peripheral sector of the complex. [4Fe-4S] cluster serves as cofactor.

The protein resides in the cell inner membrane. It catalyses the reaction a quinone + NADH + 5 H(+)(in) = a quinol + NAD(+) + 4 H(+)(out). Functionally, NDH-1 shuttles electrons from NADH, via FMN and iron-sulfur (Fe-S) centers, to quinones in the respiratory chain. The immediate electron acceptor for the enzyme in this species is believed to be ubiquinone. Couples the redox reaction to proton translocation (for every two electrons transferred, four hydrogen ions are translocated across the cytoplasmic membrane), and thus conserves the redox energy in a proton gradient. The polypeptide is NADH-quinone oxidoreductase subunit B (Rhizobium leguminosarum bv. trifolii (strain WSM2304)).